The sequence spans 685 residues: Probable transketolase (685 aa).

Residue histidine 32 coordinates substrate. Thiamine diphosphate-binding positions include histidine 72 and 121–123; that span reads GPL. Mg(2+) is bound at residue aspartate 162. Positions 163 and 192 each coordinate thiamine diphosphate. 2 residues coordinate Mg(2+): asparagine 192 and isoleucine 194. Substrate is bound by residues histidine 268, arginine 363, and serine 390. Position 268 (histidine 268) interacts with thiamine diphosphate. The thiamine diphosphate site is built by glutamate 422 and phenylalanine 448. Catalysis depends on glutamate 422, which acts as the Proton donor. Substrate-binding residues include histidine 472, aspartate 480, and arginine 531.

This sequence belongs to the transketolase family. In terms of assembly, homodimer. Requires Mg(2+) as cofactor. Ca(2+) is required as a cofactor. Mn(2+) serves as cofactor. It depends on Co(2+) as a cofactor. The cofactor is thiamine diphosphate.

The enzyme catalyses D-sedoheptulose 7-phosphate + D-glyceraldehyde 3-phosphate = aldehydo-D-ribose 5-phosphate + D-xylulose 5-phosphate. In terms of biological role, catalyzes the transfer of a two-carbon ketol group from a ketose donor to an aldose acceptor, via a covalent intermediate with the cofactor thiamine pyrophosphate. The polypeptide is Probable transketolase (Schizosaccharomyces pombe (strain 972 / ATCC 24843) (Fission yeast)).